The primary structure comprises 323 residues: Pseudouridylate synthase TRUB2, mitochondrial (323 aa).

Residue Asp-98 is the Nucleophile of the active site. Residues 302–323 (SGHQQQLPSAGQPWASRVQAPL) form a disordered region.

This sequence belongs to the pseudouridine synthase TruB family. In terms of assembly, forms a regulatory protein-RNA complex, consisting of RCC1L, NGRN, RPUSD3, RPUSD4, TRUB2, FASTKD2 and 16S mt-rRNA.

It localises to the mitochondrion matrix. It catalyses the reaction a uridine in mRNA = a pseudouridine in mRNA. The catalysed reaction is uridine(55) in tRNA = pseudouridine(55) in tRNA. Functionally, minor enzyme contributing to the isomerization of uridine to pseudouridine (pseudouridylation) of specific mitochondrial mRNAs (mt-mRNAs) such as COXI and COXIII mt-mRNAs. As a component of a functional protein-RNA module, consisting of RCC1L, NGRN, RPUSD3, RPUSD4, TRUB2, FASTKD2 and 16S mitochondrial ribosomal RNA (16S mt-rRNA), controls 16S mt-rRNA abundance and is required for intra-mitochondrial translation. Also catalyzes pseudouridylation of some tRNAs, including synthesis of pseudouridine(55) from uracil-55, in the psi GC loop of a subset of tRNAs. This is Pseudouridylate synthase TRUB2, mitochondrial from Rattus norvegicus (Rat).